A 100-amino-acid polypeptide reads, in one-letter code: Large ribosomal subunit protein uL23 (100 aa).

This sequence belongs to the universal ribosomal protein uL23 family. Part of the 50S ribosomal subunit. Contacts protein L29, and trigger factor when it is bound to the ribosome.

In terms of biological role, one of the early assembly proteins it binds 23S rRNA. One of the proteins that surrounds the polypeptide exit tunnel on the outside of the ribosome. Forms the main docking site for trigger factor binding to the ribosome. The polypeptide is Large ribosomal subunit protein uL23 (Xylella fastidiosa (strain 9a5c)).